The chain runs to 267 residues: Cysteine protease avirulence protein AvrPphB (267 aa).

Residue glycine 63 is the site of N-myristoyl glycine; by host attachment. Active-site residues include cysteine 98, histidine 212, and aspartate 227.

It belongs to the peptidase C58 family. As to quaternary structure, in infected plant cells, the 28 kDa product interacts with PBS1. In terms of processing, autocleaved. This function is essential for myristoylation in infected plant cell and for eliciting the plant hypersensitive response. Myristoylation of 28 kDa product in infected plant cells; it mediates the localization to membranes.

It localises to the secreted. It is found in the host membrane. In terms of biological role, cysteine protease avirulence protein, which is essential during infection of plant cells from cultivar-specific of beans and Arabidopsis thaliana. The autocleavage of the protein is required for virulence function. May act by affecting the plant defense system. In plants lacking R3 or RPS5 resistance genes, it probably impairs the plant defense system and leads to the bacteria multiplication. In contrast, in plants containing the R3 or RPS5 protein, it is unable to induce disease symptoms, explaining its avirulence name. The 7 kDa product is required for the type-III translocation from Pseudomonas strains to the plant, but are partially dispensable for effector recognition following in planta expression. In infected plants, it acts by cleaving the PBS1 protein, which leads to resistance or disease, depending on the presence or absence of RPS5, respectively. Targets the Arabidopsis kinases PBS1, BIK1, PBL1, PBL2, PBL3, PBL5, PBL7, PBL9 and PBL11 for cleavage in vitro. Can block recognition of AvrB avirulence factor by plant cells by cleaving Arabidopsis RIPK kinase and suppressing Arabidopsis RPM1 activation. Cannot block AvrRpm1-induced activation of RPM1. The sequence is that of Cysteine protease avirulence protein AvrPphB (avrPph3) from Pseudomonas savastanoi pv. phaseolicola (Pseudomonas syringae pv. phaseolicola).